The chain runs to 1128 residues: Transient receptor potential-gamma protein (1128 aa).

Residues 1 to 325 (MMEEENTIRP…MALQAVDIIR (325 aa)) lie on the Cytoplasmic side of the membrane. 2 ANK repeats span residues 57-86 (LGRTALLMAIDNENLEMVELLINYNVDTKD) and 131-160 (PDITPLILAAHRDNYEIIKILLDRGAVLPM). The chain crosses the membrane as a helical span at residues 326–346 (IGIMFPIFSLAYILAPYSSIG). Over 347–403 (QTMRKPFIKFICHSASYFTFLFLLMLASQRIETFIGGWFFADSSGMLNTMEELPTKR) the chain is Extracellular. The helical transmembrane segment at 404–424 (GAKPTFIEWLILAWVSGLIWS) threads the bilayer. Residues 425 to 444 (EVKQLWDVGLQEYLNDMWNV) lie on the Cytoplasmic side of the membrane. The helical transmembrane segment at 445-465 (IDFVTNSLYVATVALRVVSFF) threads the bilayer. Over 466 to 492 (QVQKEMIYNSHATDLPRERWDAWDPML) the chain is Extracellular. Residues 493 to 513 (ISEGLFSAANIFSSLKLVYIF) traverse the membrane as a helical segment. Residues 514–535 (SVNPHLGPLQVSLSRMVMDIMK) lie on the Cytoplasmic side of the membrane. The helical transmembrane segment at 536–556 (FFFLYVLVLFAFGSGLNQLLW) threads the bilayer. The Extracellular segment spans residues 557–629 (YYADLEKKRC…GIKIFTRFWG (73 aa)). The helical transmembrane segment at 630–650 (MLMFGTYSVINIVVLLNLLIA) threads the bilayer. Over 651–1128 (MMNHSYQLIS…SCVSTTGAIG (478 aa)) the chain is Cytoplasmic. Disordered stretches follow at residues 865 to 898 (RQQSQAGSGGGGSESPTTPTAPQGTQGAAMTASS) and 1064 to 1111 (AAEA…SVNS). Residues 878–893 (ESPTTPTAPQGTQGAA) show a composition bias toward low complexity. Residues 1085-1111 (TQSQHDSVETNSTFTLSIDPSNTSVNS) show a composition bias toward polar residues.

Belongs to the transient receptor (TC 1.A.4) family. STrpC subfamily. As to quaternary structure, interacts preferentially with trpl and interacts to a lower extent with trp. Expressed predominantly in the rhabdomeres of photoreceptor cells.

It localises to the cell projection. The protein resides in the rhabdomere membrane. In terms of biological role, a light-sensitive calcium channel that is required for inositide-mediated Ca(2+) entry in the retina during phospholipase C (PLC)-mediated phototransduction. Forms a regulated cation channel when heteromultimerized with trpl. The chain is Transient receptor potential-gamma protein (Trpgamma) from Drosophila melanogaster (Fruit fly).